The primary structure comprises 65 residues: U15-hexatoxin-Mg1a (65 aa).

Post-translationally, contains 4 disulfide bonds. In terms of tissue distribution, expressed by the venom gland.

The protein localises to the secreted. Intrathorax injection into crickets causes paralysis prolonged for more than 60 minutes, followed by recovery. The chain is U15-hexatoxin-Mg1a from Macrothele gigas (Japanese funnel web spider).